We begin with the raw amino-acid sequence, 782 residues long: E3 ubiquitin-protein ligase SopA (782 aa).

A disordered region spans residues 140 to 170 (SANNRPTVSEGRTPPVSPSLSLQATSSPSSP). The span at 157-170 (PSLSLQATSSPSSP) shows a compositional bias: low complexity. The active-site Glycyl thioester intermediate is Cys-753.

The protein belongs to the SopA E3 ligase family. In terms of processing, ubiquitinated in the presence of host E1 ubiquitin-activating enzyme, E2 ubiquitin-conjugating enzyme and ubiquitin.

The protein localises to the secreted. Its subcellular location is the host cell. It catalyses the reaction S-ubiquitinyl-[E2 ubiquitin-conjugating enzyme]-L-cysteine + [acceptor protein]-L-lysine = [E2 ubiquitin-conjugating enzyme]-L-cysteine + N(6)-ubiquitinyl-[acceptor protein]-L-lysine.. Effector proteins function to alter host cell physiology and promote bacterial survival in host tissues. This protein is an E3 ubiquitin ligase that interferes with host's ubiquitination pathway. This is E3 ubiquitin-protein ligase SopA (sopA) from Salmonella agona (strain SL483).